Here is a 374-residue protein sequence, read N- to C-terminus: Probable dual-specificity RNA methyltransferase RlmN 3 (374 aa).

The active-site Proton acceptor is glutamate 96. One can recognise a Radical SAM core domain in the interval 110–350 (DHSRKTICIS…VTLRREKGHD (241 aa)). Cysteine 117 and cysteine 355 are oxidised to a cystine. Residues cysteine 124, cysteine 128, and cysteine 131 each contribute to the [4Fe-4S] cluster site. Residues 181-182 (GE), serine 213, 236-238 (SLH), and asparagine 312 contribute to the S-adenosyl-L-methionine site. Cysteine 355 (S-methylcysteine intermediate) is an active-site residue.

It belongs to the radical SAM superfamily. RlmN family. Requires [4Fe-4S] cluster as cofactor.

The protein localises to the cytoplasm. It catalyses the reaction adenosine(2503) in 23S rRNA + 2 reduced [2Fe-2S]-[ferredoxin] + 2 S-adenosyl-L-methionine = 2-methyladenosine(2503) in 23S rRNA + 5'-deoxyadenosine + L-methionine + 2 oxidized [2Fe-2S]-[ferredoxin] + S-adenosyl-L-homocysteine. It carries out the reaction adenosine(37) in tRNA + 2 reduced [2Fe-2S]-[ferredoxin] + 2 S-adenosyl-L-methionine = 2-methyladenosine(37) in tRNA + 5'-deoxyadenosine + L-methionine + 2 oxidized [2Fe-2S]-[ferredoxin] + S-adenosyl-L-homocysteine. Functionally, specifically methylates position 2 of adenine 2503 in 23S rRNA and position 2 of adenine 37 in tRNAs. In Opitutus terrae (strain DSM 11246 / JCM 15787 / PB90-1), this protein is Probable dual-specificity RNA methyltransferase RlmN 3.